Consider the following 555-residue polypeptide: DNA ligase (555 aa).

Residue E247 coordinates ATP. The N6-AMP-lysine intermediate role is filled by K249. ATP contacts are provided by R254, R269, E298, F337, R411, and K417.

Belongs to the ATP-dependent DNA ligase family. Requires Mg(2+) as cofactor.

It carries out the reaction ATP + (deoxyribonucleotide)n-3'-hydroxyl + 5'-phospho-(deoxyribonucleotide)m = (deoxyribonucleotide)n+m + AMP + diphosphate.. Its function is as follows. DNA ligase that seals nicks in double-stranded DNA during DNA replication, DNA recombination and DNA repair. The chain is DNA ligase from Archaeoglobus fulgidus (strain ATCC 49558 / DSM 4304 / JCM 9628 / NBRC 100126 / VC-16).